The sequence spans 470 residues: 5-hydroxytryptamine receptor 2A (470 aa).

Residues 1–80 (MDVLCEENTS…LQEKNWSALL (80 aa)) lie on the Extracellular side of the membrane. Asn8, Asn38, Asn44, Asn51, Asn54, and Asn75 each carry an N-linked (GlcNAc...) asparagine glycan. The helical transmembrane segment at 81-97 (TAVVIILTIAGNILVIM) threads the bilayer. Residues 98-111 (AVSLEKKLQNATNY) are Cytoplasmic-facing. The chain crosses the membrane as a helical span at residues 112-137 (FLMSLAIADMLLGFLVMPVSMLTILY). The Extracellular segment spans residues 138-146 (GYRWPLPSK). A helical membrane pass occupies residues 147–171 (LCAVWIYLDVLFSTASIMHLCAISL). Cys148 and Cys227 form a disulfide bridge. A serotonin-binding site is contributed by Asp155. The DRY motif; important for ligand-induced conformation changes signature appears at 172 to 174 (DRY). At 172-191 (DRYVAIQNPIHHRRFNSRTK) the chain is on the cytoplasmic side. The helical transmembrane segment at 192 to 215 (AFLKIIAVWTISVGISMPIPVFGL) threads the bilayer. At 216-232 (QDDSKVFKEGSCLLADD) the chain is on the extracellular side. Residues 233 to 258 (NFVLIGSFVSFFIPLTIMVITYFLTI) form a helical membrane-spanning segment. Residues 259-321 (KSLQKEATLC…QSISNEQKAC (63 aa)) lie on the Cytoplasmic side of the membrane. Phosphoserine is present on Ser280. Residues 322–347 (KVLGIVFFLFVVMWCPFFITNIMAVI) traverse the membrane as a helical segment. Serotonin is bound at residue Asn342. Cys348 and Cys352 are joined by a disulfide. The Extracellular segment spans residues 348–355 (CKESCNED). Residues 356–381 (VIGALLNVFVWIGYLSSAVNPLVYTL) form a helical membrane-spanning segment. Residues 375–379 (NPLVY) carry the NPxxY motif; important for ligand-induced conformation changes and signaling motif. The Cytoplasmic portion of the chain corresponds to 382-470 (FNKTYRSAFS…NTVNEKVSCV (89 aa)). Positions 448-470 (GKQHSEDAPADNSNTVNEKVSCV) are disordered. Residues 458 to 470 (DNSNTVNEKVSCV) are compositionally biased toward polar residues. The short motif at 468-470 (SCV) is the PDZ-binding element.

It belongs to the G-protein coupled receptor 1 family. In terms of assembly, interacts (via C-terminus) with MPDZ and PATJ. May interact (via C-terminus) with MPP3, PRDX6, DLG4, DLG1, CASK, APBA1 and MAGI2. Interacts with GRM2 and DRD2; this may affect signaling.

The protein resides in the cell membrane. The protein localises to the cell projection. Its subcellular location is the dendrite. It localises to the axon. It is found in the cytoplasmic vesicle. The protein resides in the membrane. The protein localises to the caveola. Its subcellular location is the presynapse. G-protein coupled receptor activity is regulated by lipids: oleamide increases HTR2A-mediated activity. In terms of biological role, G-protein coupled receptor for 5-hydroxytryptamine (serotonin). Also functions as a receptor for various drugs and psychoactive substances, including mescaline, psilocybin, 1-(2,5-dimethoxy-4-iodophenyl)-2-aminopropane (DOI) and lysergic acid diethylamide (LSD). Ligand binding causes a conformation change that triggers signaling via guanine nucleotide-binding proteins (G proteins) and modulates the activity of downstream effectors. HTR2A is coupled to G(q)/G(11) G alpha proteins and activates phospholipase C-beta, releasing diacylglycerol (DAG) and inositol 1,4,5-trisphosphate (IP3) second messengers that modulate the activity of phosphatidylinositol 3-kinase and promote the release of Ca(2+) ions from intracellular stores, respectively. Beta-arrestin family members inhibit signaling via G proteins and mediate activation of alternative signaling pathways. Affects neural activity, perception, cognition and mood. Plays a role in the regulation of behavior, including responses to anxiogenic situations and psychoactive substances. Plays a role in intestinal smooth muscle contraction, and may play a role in arterial vasoconstriction. The polypeptide is 5-hydroxytryptamine receptor 2A (HTR2A) (Sus scrofa (Pig)).